A 365-amino-acid polypeptide reads, in one-letter code: GTPase Obg (365 aa).

Residues 1–177 (MFTDYVRILA…GQFLLELKTI (177 aa)) form the Obg domain. The interval 64–85 (QFAEDGQPGKGQKRKGRDGKNL) is disordered. Residues 178–348 (ADVGFVGLPN…FLNSCRKSFE (171 aa)) form the OBG-type G domain. GTP-binding positions include 184 to 191 (GLPNSGKS), 209 to 213 (FTTLK), 231 to 234 (DIPG), 300 to 303 (NKVD), and 329 to 331 (SAL). Mg(2+)-binding residues include Ser-191 and Thr-211.

Belongs to the TRAFAC class OBG-HflX-like GTPase superfamily. OBG GTPase family. In terms of assembly, monomer. It depends on Mg(2+) as a cofactor.

It localises to the cytoplasm. Functionally, an essential GTPase which binds GTP, GDP and possibly (p)ppGpp with moderate affinity, with high nucleotide exchange rates and a fairly low GTP hydrolysis rate. Plays a role in control of the cell cycle, stress response, ribosome biogenesis and in those bacteria that undergo differentiation, in morphogenesis control. The sequence is that of GTPase Obg from Methylacidiphilum infernorum (isolate V4) (Methylokorus infernorum (strain V4)).